We begin with the raw amino-acid sequence, 271 residues long: ATP synthase subunit delta (271 aa).

The protein belongs to the ATPase delta chain family. As to quaternary structure, F-type ATPases have 2 components, F(1) - the catalytic core - and F(0) - the membrane proton channel. F(1) has five subunits: alpha(3), beta(3), gamma(1), delta(1), epsilon(1). F(0) has three main subunits: a(1), b(2) and c(10-14). The alpha and beta chains form an alternating ring which encloses part of the gamma chain. F(1) is attached to F(0) by a central stalk formed by the gamma and epsilon chains, while a peripheral stalk is formed by the delta and b chains.

The protein resides in the cell membrane. Functionally, f(1)F(0) ATP synthase produces ATP from ADP in the presence of a proton or sodium gradient. F-type ATPases consist of two structural domains, F(1) containing the extramembraneous catalytic core and F(0) containing the membrane proton channel, linked together by a central stalk and a peripheral stalk. During catalysis, ATP synthesis in the catalytic domain of F(1) is coupled via a rotary mechanism of the central stalk subunits to proton translocation. In terms of biological role, this protein is part of the stalk that links CF(0) to CF(1). It either transmits conformational changes from CF(0) to CF(1) or is implicated in proton conduction. The chain is ATP synthase subunit delta from Corynebacterium kroppenstedtii (strain DSM 44385 / JCM 11950 / CIP 105744 / CCUG 35717).